The primary structure comprises 241 residues: Large ribosomal subunit protein uL30 (241 aa).

The disordered stretch occupies residues 1–32 (MATTLKPETLQKKEKAQQKTAEERAAAKKVRK). Positions 9 to 26 (TLQKKEKAQQKTAEERAA) are enriched in basic and acidic residues.

Belongs to the universal ribosomal protein uL30 family. Component of the large ribosomal subunit. Mature ribosomes consist of a small (40S) and a large (60S) subunit. The 40S subunit contains about 32 different proteins and 1 molecule of RNA (18S). The 60S subunit contains 45 different proteins and 3 molecules of RNA (25S, 5.8S and 5S).

The protein resides in the cytoplasm. In terms of biological role, component of the ribosome, a large ribonucleoprotein complex responsible for the synthesis of proteins in the cell. The small ribosomal subunit (SSU) binds messenger RNAs (mRNAs) and translates the encoded message by selecting cognate aminoacyl-transfer RNA (tRNA) molecules. The large subunit (LSU) contains the ribosomal catalytic site termed the peptidyl transferase center (PTC), which catalyzes the formation of peptide bonds, thereby polymerizing the amino acids delivered by tRNAs into a polypeptide chain. The nascent polypeptides leave the ribosome through a tunnel in the LSU and interact with protein factors that function in enzymatic processing, targeting, and the membrane insertion of nascent chains at the exit of the ribosomal tunnel. This is Large ribosomal subunit protein uL30 from Candida albicans (strain SC5314 / ATCC MYA-2876) (Yeast).